Here is a 203-residue protein sequence, read N- to C-terminus: Probable Tat proofreading chaperone DmsD (203 aa).

Belongs to the TorD/DmsD family. DmsD subfamily.

Required for biogenesis/assembly of DMSO reductase, but not for the interaction of the DmsA signal peptide with the Tat system. May be part of a chaperone cascade complex that facilitates a folding-maturation pathway for the substrate protein. This Haemophilus influenzae (strain ATCC 51907 / DSM 11121 / KW20 / Rd) protein is Probable Tat proofreading chaperone DmsD.